The sequence spans 2768 residues: Thyroglobulin (2768 aa).

Residues 1-20 form the signal peptide; the sequence is MMTLVLWVSTLLSSVCLVAA. Position 25 is an iodotyrosine; alternate (Y25). Y25 is subject to Sulfotyrosine; alternate. Y25 is subject to Thyroxine; alternate. Y25 bears the Triiodothyronine; alternate mark. 4 consecutive Thyroglobulin type-1 domains span residues 32–93, 94–161, 162–298, and 299–359; these read LRPC…PTAC, LSFC…PTRC, PRSC…RFRC, and PTKC…PLFC. Disulfide bonds link C35–C53, C64–C71, C73–C93, C97–C121, C132–C139, C141–C161, C165–C184, and C195–C236. The residue at position 109 (Y109) is an Iodotyrosine. Residue N111 is glycosylated (N-linked (GlcNAc...) asparagine). Position 150 is an iodotyrosine; alternate (Y150). Position 150 is a diiodotyrosine; alternate (Y150). N-linked (GlcNAc...) asparagine glycosylation is present at N199. An iodotyrosine mark is found at Y235 and Y259. 8 cysteine pairs are disulfide-bonded: C302–C320, C331–C337, C339–C365, C408–C608, C631–C636, C638–C658, C662–C687, and C698–C703. N484, N496, and N545 each carry an N-linked (GlcNAc...) asparagine glycan. Thyroglobulin type-1 domains lie at 605 to 658, 659 to 726, 727 to 922, 923 to 1074, 1075 to 1146, and 1147 to 1211; these read AQAC…HPRC, PTKC…PKLC, PSVC…IPAC, PGPC…MPQC, PTSC…SAQC, and PGLC…QPAC. Y704 is modified (iodotyrosine; alternate). A Thyroxine; alternate modification is found at Y704. Y704 is subject to Triiodothyronine; alternate. Y704 is subject to Diiodotyrosine; alternate. 16 cysteine pairs are disulfide-bonded: C705–C726, C730–C763, C774–C899, C901–C922, C926–C1032, C1043–C1050, C1052–C1074, C1078–C1109, C1127–C1146, C1150–C1170, C1182–C1189, C1191–C1211, C1216–C1265, C1232–C1246, C1306–C1356, and C1331–C1347. Residue N748 is glycosylated (N-linked (GlcNAc...) asparagine). The residue at position 785 (Y785) is an Iodotyrosine. N-linked (GlcNAc...) asparagine glycosylation occurs at N817. Y867 carries the post-translational modification Iodotyrosine; alternate. Y867 bears the Diiodotyrosine; alternate mark. Position 884 is a diiodotyrosine (Y884). N-linked (GlcNAc...) asparagine glycosylation is present at N948. Y993 carries the iodotyrosine; alternate modification. Y993 is subject to Diiodotyrosine; alternate. A glycan (N-linked (GlcNAc...) asparagine) is linked at N1017. N1141 carries an N-linked (GlcNAc...) asparagine glycan. Y1310 is modified (iodotyrosine). Y1310 is modified (thyroxine). 2 N-linked (GlcNAc...) asparagine glycosylation sites follow: N1349 and N1365. 9 disulfides stabilise this stretch: C1441–C1458, C1461–C1472, C1475–C1489, C1492–C1509, C1513–C1522, C1542–C1564, C1602–C1626, C1606–C1612, and C1638–C1661. Type II repeat units follow at residues 1455-1468, 1469-1485, and 1486-1502; these read PLGC…SFSQ, DGKC…GQAG, and SSAC…TITG. The Thyroglobulin type-1 11 domain occupies 1510–1564; the sequence is VTDCQRDEAGLQCDQNGQYQANQKDMDSGEVFCVDSEGQRLQWLQTEAGLSESQC. A Type IIIA repeat occupies 1602–1722; it reads CLADCADDEA…GTNLTDTHLF (121 aa). Residue N1715 is glycosylated (N-linked (GlcNAc...) asparagine). Disulfide bonds link C1723-C1748, C1727-C1733, C1732-C1834, and C1759-C1776. One copy of the Type IIIB repeat lies at 1723–1891; that stretch reads CLLACDQDSC…LFSAEQANLW (169 aa). 2 N-linked (GlcNAc...) asparagine glycosylation sites follow: N1773 and N1866. Disulfide bonds link C1892–C1918, C1896–C1903, C1927–C1938, C1995–C2023, C1999–C2005, C2004–C2075, and C2034–C2047. Residues 1892 to 1994 form a Type IIIA repeat; that stretch reads CLSRCAQEPV…EKLISNGFFE (103 aa). N-linked (GlcNAc...) asparagine glycosylation occurs at N1937. The Type IIIB repeat unit spans residues 1995–2127; sequence CERLCDRDPC…SATRNFSLAQ (133 aa). N2012 is a glycosylation site (N-linked (GlcNAc...) asparagine). An N-linked (GlcNAc...) asparagine glycan is attached at N2122. The Type IIIA repeat unit spans residues 2128-2185; it reads DFCLQECSRHQDCLVTTLQIQQGVVRCVFYPDIQSCEHSLRSKTCWLLLHEEAAYIYR. Intrachain disulfides connect C2130/C2154, C2134/C2140, and C2163/C2172. Position 2184 is an iodotyrosine (Y2184). The segment at 2188–2768 is cholinesterase-like (ChEL); sequence GAPLHQSDGI…LEPVPKSYSK (581 aa). N2251 carries an N-linked (GlcNAc...) asparagine glycan. The cysteines at positions 2265 and 2282 are disulfide-linked. N2296 and N2445 each carry an N-linked (GlcNAc...) asparagine glycan. An intrachain disulfide couples C2443 to C2454. The residue at position 2541 (Y2541) is a Thyroxine. The residue at position 2574 (Y2574) is an Iodotyrosine; alternate. The residue at position 2574 (Y2574) is a Thyroxine; alternate. A Triiodothyronine; alternate modification is found at Y2574. Y2574 bears the Diiodotyrosine; alternate mark. The N-linked (GlcNAc...) asparagine glycan is linked to N2583. An iodotyrosine mark is found at Y2588 and Y2618. Residues C2592 and C2716 are joined by a disulfide bond. Residue Y2698 is modified to Diiodotyrosine. Positions 2731–2768 are disordered; it reads GAKDAQLTKSGEEDLEVGPGSEEDFSGSLEPVPKSYSK. Residues 2743–2755 show a composition bias toward acidic residues; the sequence is EDLEVGPGSEEDF. Y2766 bears the Iodotyrosine; alternate mark. Thyroxine; alternate is present on Y2766. A Triiodothyronine; alternate modification is found at Y2766. At Y2766 the chain carries Diiodotyrosine; alternate.

Belongs to the type-B carboxylesterase/lipase family. Monomer. Homodimer (via ChEL region); occurs in the endoplasmic reticulum and is required for export to the Golgi apparatus. Homooligomer; disulfide-linked; stored in this form in the thyroid follicle lumen. Post-translationally, iodinated on tyrosine residues by TPO. There are 4 pairs of iodinated tyrosines used for coupling: acceptor Tyr-25 is coupled to donor Tyr-150 or Tyr-235, acceptor Tyr-2574 is coupled to donor Tyr-2541, acceptor Tyr-2766 in monomer 1 is coupled to donor Tyr-2766 in monomer 2 and acceptor Tyr-1310 in monomer 1 is coupled to donor Tyr-109 in monomer 2. In terms of processing, sulfated tyrosines are desulfated during iodination. Undergoes sequential proteolysis by cathepsins to release thyroxine (T4) and triiodothyronine (T3) hormones. In the thyroid follicle lumen, cross-linked TG (storage form) is solubilized by limited proteolysis mediated by cathepsins CTSB and/or CTSL. Partially cleaved TG is further processed by CTSK/cathepsin K and/or CTSL resulting in the release of thyroxine (T4). Following endocytosis, further processing occurs leading to the release of triiodothyronine (T3) and more T4 hormones. Specifically expressed in the thyroid gland.

The protein resides in the secreted. In terms of biological role, acts as a substrate for the production of iodinated thyroid hormones thyroxine (T4) and triiodothyronine (T3). The synthesis of T3 and T4 involves iodination of selected tyrosine residues of TG/thyroglobulin followed by their oxidative coupling. Following TG re-internalization and lysosomal-mediated proteolysis, T3 and T4 are released from the polypeptide backbone leading to their secretion into the bloodstream. One dimer produces 7 thyroid hormone molecules. The protein is Thyroglobulin (Tg) of Rattus norvegicus (Rat).